A 311-amino-acid polypeptide reads, in one-letter code: Aspartate carbamoyltransferase catalytic subunit (311 aa).

The carbamoyl phosphate site is built by R55 and T56. K85 is a binding site for L-aspartate. The carbamoyl phosphate site is built by R106, H135, and Q138. The L-aspartate site is built by R168 and R230. Residues L268 and P269 each contribute to the carbamoyl phosphate site.

The protein belongs to the aspartate/ornithine carbamoyltransferase superfamily. ATCase family. In terms of assembly, heterododecamer (2C3:3R2) of six catalytic PyrB chains organized as two trimers (C3), and six regulatory PyrI chains organized as three dimers (R2).

It carries out the reaction carbamoyl phosphate + L-aspartate = N-carbamoyl-L-aspartate + phosphate + H(+). It functions in the pathway pyrimidine metabolism; UMP biosynthesis via de novo pathway; (S)-dihydroorotate from bicarbonate: step 2/3. Its function is as follows. Catalyzes the condensation of carbamoyl phosphate and aspartate to form carbamoyl aspartate and inorganic phosphate, the committed step in the de novo pyrimidine nucleotide biosynthesis pathway. This is Aspartate carbamoyltransferase catalytic subunit from Serratia proteamaculans (strain 568).